A 352-amino-acid polypeptide reads, in one-letter code: Thrombopoietin (352 aa).

Residues 1-23 (MELTELLLVVMLLLTARLDPCLP) form the signal peptide. Disulfide bonds link C28/C172 and C50/C106. N185, N197, N206, N234, and N255 each carry an N-linked (GlcNAc...) asparagine glycan. The segment covering 233-245 (LNQTSRSLNQTPG) has biased composition (polar residues). Disordered regions lie at residues 233 to 259 (LNQTSRSLNQTPGHLSRTHGPLNGTHG) and 292 to 352 (YSPS…SQEE). Positions 311 to 327 (PTSPTPQNPLQPPPPDP) are enriched in pro residues. N-linked (GlcNAc...) asparagine glycosylation is found at N332 and N347.

It belongs to the EPO/TPO family.

The protein resides in the secreted. Its function is as follows. Lineage-specific cytokine affecting the proliferation and maturation of megakaryocytes from their committed progenitor cells. It acts at a late stage of megakaryocyte development. It may be the major physiological regulator of circulating platelets. The polypeptide is Thrombopoietin (THPO) (Canis lupus familiaris (Dog)).